A 1858-amino-acid polypeptide reads, in one-letter code: Inactive histone-lysine N-methyltransferase 2E (1858 aa).

Positions 63–66 (DHNY) match the HCFC1-binding motif (HBM) motif. Residues 118–166 (VTRCICGFTHDDGYMICCDKCSVWQHIDCMGIDRQHIPDTYLCERCQPR) form a PHD-type zinc finger. Cysteine 121, cysteine 123, cysteine 135, cysteine 138, histidine 143, cysteine 146, cysteine 160, and cysteine 163 together coordinate Zn(2+). The segment at 217–269 (ASRVSKVNDKRRKKSGEKEQHISKCKKAFREGSRKSSRVKGSAPEIDPSSDGS) is disordered. A compositionally biased stretch (basic and acidic residues) spans 232 to 250 (GEKEQHISKCKKAFREGSR). Positions 330–447 (PPVESHIQKN…KGTEITIAFD (118 aa)) constitute an SET domain. O-linked (GlcNAc) serine glycosylation occurs at serine 435. An O-linked (GlcNAc) threonine glycan is attached at threonine 440. Positions 475–530 (SESMENINSGYETRRKKGKKDKDISKEKDTQNQNITLDCEGTTNKMKSPETKQRKL) are disordered. The segment covering 494-504 (KDKDISKEKDT) has biased composition (basic and acidic residues). The segment covering 505–520 (QNQNITLDCEGTTNKM) has biased composition (polar residues). Residues 559 to 615 (VEMESEEQIAERKRKMTREERKMEAILQAFARLEKREKRREQALERISTAKTEVKTE) adopt a coiled-coil conformation. Serine 623 is subject to Phosphoserine. Residues 630-687 (EQAKEENASKPTPAKVNRTKQRKSFSRSRTHIGQQRRRHRTVSMCSDIQPSSPDIEVT) form a disordered region. A compositionally biased stretch (basic residues) spans 646 to 670 (NRTKQRKSFSRSRTHIGQQRRRHRT). Over residues 672 to 687 (SMCSDIQPSSPDIEVT) the composition is skewed to polar residues. Phosphoserine is present on residues serine 837 and serine 845. Composition is skewed to low complexity over residues 887-901 (TSTP…PTHT) and 933-957 (PVTP…PESS). Disordered regions lie at residues 887 to 960 (TSTP…SPEI) and 1039 to 1068 (LETP…SSWV). The segment covering 1039-1048 (LETPAHDRAE) has biased composition (basic and acidic residues). Residues 1049–1068 (PNSQLDSTHSGRGTMYSSWV) show a composition bias toward polar residues. Serine 1070 carries the phosphoserine modification. Disordered stretches follow at residues 1164-1561 (KRQR…QNQQ) and 1581-1835 (VFTS…PVPG). Composition is skewed to polar residues over residues 1186-1206 (PHAS…NDNG) and 1222-1235 (TVYN…SNNC). Serine 1273 is subject to Phosphoserine. Residues 1273 to 1282 (SDHRKDKDSG) are compositionally biased toward basic and acidic residues. Composition is skewed to low complexity over residues 1285-1303 (SPCV…SSHS) and 1349-1362 (KSPP…SPGS). Serine 1359 bears the Phosphoserine mark. 2 stretches are compositionally biased toward polar residues: residues 1400–1432 (QQKQ…SQKL) and 1506–1542 (LPAN…LNST). Pro residues predominate over residues 1543 to 1553 (APPPPPPPPPS). Residues 1581–1599 (VFTSGPNQALPGTTSQQTV) are compositionally biased toward polar residues. A compositionally biased stretch (pro residues) spans 1626-1637 (VPPPPPPPPAPG). Positions 1642–1651 (QQPNSHQQHS) are enriched in polar residues. Over residues 1677–1687 (LPPPPPPPGPA) the composition is skewed to pro residues. Polar residues predominate over residues 1698 to 1711 (TGLQGLQAQHQHVV). The segment covering 1714–1724 (APPPPPPPPPS) has biased composition (pro residues). Positions 1798–1808 (QGPNSIPTPTA) are enriched in polar residues.

The protein belongs to the class V-like SAM-binding methyltransferase superfamily. Histone-lysine methyltransferase family. TRX/MLL subfamily. In terms of assembly, component of a complex composed of KMT2E (isoform 3), OGT and USP7; the complex stabilizes KMT2E, preventing KMT2E ubiquitination and proteasomal-mediated degradation. Isoform 3 interacts (via N-terminus) with OGT (via TRP repeats). Isoform 3 interacts with deubiquitinating enzyme USP7 (via MATH domain). Isoform 3 interacts (via HBM motif) with HCFC1 (via Kelch domain). Isoform 3 interacts with E2F1; the interaction is probably indirect and is mediated via HCFC1. Ubiquitinated. Deubiquitinated by USP7. In terms of processing, O-glycosylated at Ser-435 and Thr-440 in the SET domain by OGT which probably prevents KMT2E proteasomal-mediated degradation. In terms of tissue distribution, widely expressed in both adult and fetal tissues. Highest levels of expression observed in fetal thymus and kidney and in adult hematopoietic tissues, jejunum and cerebellum. Isoform NKp44L: Not detected on circulating cells from healthy individuals, but is expressed on a large panel of tumor and transformed cells.

The protein localises to the chromosome. It is found in the cytoplasm. It localises to the cytoskeleton. Its subcellular location is the microtubule organizing center. The protein resides in the centrosome. The protein localises to the nucleus speckle. It is found in the nucleus. It localises to the nucleoplasm. Its subcellular location is the cell membrane. Functionally, associates with chromatin regions downstream of transcriptional start sites of active genes and thus regulates gene transcription. Chromatin interaction is mediated via the binding to tri-methylated histone H3 at 'Lys-4' (H3K4me3). Key regulator of hematopoiesis involved in terminal myeloid differentiation and in the regulation of hematopoietic stem cell (HSCs) self-renewal by a mechanism that involves DNA methylation. Also acts as an important cell cycle regulator, participating in cell cycle regulatory network machinery at multiple cell cycle stages including G1/S transition, S phase progression and mitotic entry. Recruited to E2F1 responsive promoters by HCFC1 where it stimulates tri-methylation of histone H3 at 'Lys-4' and transcriptional activation and thereby facilitates G1 to S phase transition. During myoblast differentiation, required to suppress inappropriate expression of S-phase-promoting genes and maintain expression of determination genes in quiescent cells. Its function is as follows. Cellular ligand for NCR2/NKp44, may play a role as a danger signal in cytotoxicity and NK-cell-mediated innate immunity. The polypeptide is Inactive histone-lysine N-methyltransferase 2E (KMT2E) (Homo sapiens (Human)).